A 446-amino-acid chain; its full sequence is Putative RNA-ligase (446 aa).

The protein belongs to the asfivirus M448R family.

Its subcellular location is the virion. In African swine fever virus (isolate Tick/Malawi/Lil 20-1/1983) (ASFV), this protein is Putative RNA-ligase.